Here is a 198-residue protein sequence, read N- to C-terminus: Recombination protein RecR (198 aa).

The C4-type zinc finger occupies 57–72 (CEKCNTFTEAQICEVC). Positions 80–175 (TLLCVVETPA…AVTRLARGVP (96 aa)) constitute a Toprim domain.

This sequence belongs to the RecR family.

Its function is as follows. May play a role in DNA repair. It seems to be involved in an RecBC-independent recombinational process of DNA repair. It may act with RecF and RecO. In Burkholderia cenocepacia (strain HI2424), this protein is Recombination protein RecR.